The following is a 261-amino-acid chain: uncharacterized protein (261 aa).

It belongs to the FrhB family.

This is an uncharacterized protein from Methanocaldococcus jannaschii (strain ATCC 43067 / DSM 2661 / JAL-1 / JCM 10045 / NBRC 100440) (Methanococcus jannaschii).